Reading from the N-terminus, the 323-residue chain is Sodium/potassium-transporting ATPase subunit beta-2 (323 aa).

At 1–50 the chain is on the cytoplasmic side; the sequence is MPTITEDCIDGFQQYYSRPPERPKKKSLKQMVYDSEDNSYFGRSMDSWAK. The helical; Signal-anchor for type II membrane protein transmembrane segment at 51–71 threads the bilayer; that stretch reads IGIFYVAFYGVLAALVAICMW. Over 72–323 the chain is Extracellular; the sequence is AFFQTLDPRI…GSVHYELLID (252 aa). 2 disulfides stabilise this stretch: cysteine 153-cysteine 165 and cysteine 175-cysteine 189. N-linked (GlcNAc...) asparagine glycosylation is found at asparagine 180 and asparagine 206. Cysteine 241 and cysteine 298 are disulfide-bonded.

The protein belongs to the X(+)/potassium ATPases subunit beta family. In terms of assembly, the sodium/potassium-transporting ATPase is composed of a catalytic alpha subunit, an auxiliary non-catalytic beta subunit and an additional regulatory subunit. As to expression, in embryos, it is expressed in the neurons of the CNS and PNS, in Garland cells and posterior spiracles. In adults, it shows a nervous system specific distribution: optic lobes, brain, thoracic ganglia and axonal pathways in the leg. Both isoforms concentrate in the adult head, isoform 2.2 being predominant. Both isoforms are weakly expressed in the thorax and very poorly expressed in the abdomen.

The protein localises to the cell membrane. In terms of biological role, this is the non-catalytic component of the active enzyme, which catalyzes the hydrolysis of ATP coupled with the exchange of Na(+) and K(+) ions across the plasma membrane. The beta subunit regulates, through assembly of alpha/beta heterodimers, the number of sodium pumps transported to the plasma membrane. In Drosophila melanogaster (Fruit fly), this protein is Sodium/potassium-transporting ATPase subunit beta-2 (nrv2).